The primary structure comprises 699 residues: Ferric reduction oxidase 4 (699 aa).

Residues 1–9 lie on the Cytoplasmic side of the membrane; that stretch reads MGNMRSLVK. A helical transmembrane segment spans residues 10–29; sequence TLMVVLFLGWILVWIMISTN. The Lumenal portion of the chain corresponds to 30–54; it reads LFKSKWTPKLSKYLNTTYFGPQGTN. A helical transmembrane segment spans residues 55–73; that stretch reads LVLLTVPMMFIAVLSCVYL. At 74-101 the chain is on the cytoplasmic side; that stretch reads HIQKKPTQPQREWKLKRIMGRVIMVMNP. Residues 102-125 traverse the membrane as a helical segment; the sequence is LGIVTATELTFSLLFVALLAWSLY. The Lumenal segment spans residues 126–190; sequence NYLYLSYHVH…VGLTSESSIK (65 aa). In terms of domain architecture, Ferric oxidoreductase spans 157 to 275; that stretch reads GYVGNICWAF…HHLYGLYIVF (119 aa). Residues 191–214 traverse the membrane as a helical segment; it reads YHIWLGHVSNFCFLVHTVVFLIYW. His192 and His206 together coordinate heme. At 215–264 the chain is on the cytoplasmic side; the sequence is AMINKLMETFAWNPTYVPNLAGTIAMVIGIAMWVTSLPSFRRKKFEIFFY. A helical membrane pass occupies residues 265-289; that stretch reads THHLYGLYIVFYVIHVGDSWFCMIL. Heme is bound by residues His266 and His279. Over 290 to 311 the chain is Lumenal; that stretch reads PNIFLFFIDRYLRFLQSTKRSR. An FAD-binding FR-type domain is found at 305–408; it reads QSTKRSRLVS…EGPYGPNSFD (104 aa). A helical transmembrane segment spans residues 312–332; it reads LVSARILPSDNLELTFSKTPG. The Cytoplasmic portion of the chain corresponds to 333-525; that stretch reads LHYTPTSILF…PISPVLGPNN (193 aa). 354–357 contacts FAD; that stretch reads HPFT. 400 to 403 serves as a coordination point for NAD(+); sequence GPYG. Residues 526–548 form a helical membrane-spanning segment; sequence FLWLGVVILSSFVMFLLLIGIVT. The Lumenal segment spans residues 549–568; that stretch reads RYYIYPVDHNTGSIYNFSYR. The chain crosses the membrane as a helical span at residues 569–590; the sequence is GLWDMFLGSACIFISSSVVFLW. Topologically, residues 591–699 are cytoplasmic; sequence RKKQNKEGDK…LHFEAISFNW (109 aa).

The protein belongs to the ferric reductase (FRE) family. FAD serves as cofactor. Expressed in siliques. Detected at low levels in roots, cotyledon veins and shoots.

Its subcellular location is the membrane. The catalysed reaction is 2 a Fe(II)-siderophore + NAD(+) + H(+) = 2 a Fe(III)-siderophore + NADH. Its function is as follows. Ferric chelate reductase. May participate in the transport of electrons to a Fe(3+) ion via FAD and heme intermediates. May function as root surface cupric chelate reductase and participate in the reduction of Cu(2+), for Cu(+) acquisition via Cu(+) transporters in response to copper deficiency. The chain is Ferric reduction oxidase 4 (FRO4) from Arabidopsis thaliana (Mouse-ear cress).